The primary structure comprises 242 residues: Caspase-14 (242 aa).

Positions 1 to 5 (MSNPR) are excised as a propeptide. Active-site residues include His-89 and Cys-132. The propeptide occupies 147–152 (EIVMVI).

It belongs to the peptidase C14A family. In terms of assembly, heterodimer of a large and a small subunit, both processed from the precursor; the mature active form is a p17/p10 dimer and the intermediate form a p20/p8 dimer. Post-translationally, maturation by proteolytic processing appears to be a two-step process. The precursor is processed by KLK7 to yield the p20/p8 intermediate form which acts on the precursor to yield the p17/p10 mature form. Initially, cleavage between Ile-152 and Lys-153 has been proposed to yield the large and small subunits of the active enzyme. As to expression, expressed in keratinocytes of adult skin suprabasal layers (from spinous layers to the stratum granulosum and stratum corneum) (at protein level). Expressed in keratinocytes of hair shaft and sebaceous glands (at protein level). In psoriatic skin only expressed at very low levels. The p17/10 mature form is expressed in epidermis stratum corneum, the p20/p8 intermediate form in epidermis upper granular cells of the stratum granulosum.

It localises to the cytoplasm. It is found in the nucleus. Inhibited by caspase-1 inhibitor YVAD-FMK and the pan-caspase inhibitor VAD-FMK. Its function is as follows. Non-apoptotic caspase involved in epidermal differentiation. Is the predominant caspase in epidermal stratum corneum. Seems to play a role in keratinocyte differentiation and is required for cornification. Regulates maturation of the epidermis by proteolytically processing filaggrin. In vitro has a preference for the substrate [WY]-X-X-D motif and is active on the synthetic caspase substrate WEHD-ACF. Involved in processing of prosaposin in the epidermis. May be involved in retinal pigment epithelium cell barrier function. Involved in DNA degradation in differentiated keratinocytes probably by cleaving DFFA/ICAD leading to liberation of DFFB/CAD. This Homo sapiens (Human) protein is Caspase-14 (CASP14).